A 175-amino-acid chain; its full sequence is Co-chaperone protein HscB homolog (175 aa).

Residues serine 7–leucine 79 form the J domain.

The protein belongs to the HscB family. Interacts with HscA and stimulates its ATPase activity.

Co-chaperone involved in the maturation of iron-sulfur cluster-containing proteins. Seems to help targeting proteins to be folded toward HscA. This is Co-chaperone protein HscB homolog from Burkholderia multivorans (strain ATCC 17616 / 249).